A 447-amino-acid polypeptide reads, in one-letter code: Peptide-N(4)-(N-acetyl-beta-glucosaminyl)asparagine amidase (447 aa).

Positions 209, 212, 241, and 244 each coordinate Zn(2+). The active-site Nucleophile is C267. Catalysis depends on residues H294 and D311.

It belongs to the transglutaminase-like superfamily. PNGase family. It depends on Zn(2+) as a cofactor.

Its subcellular location is the cytoplasm. It catalyses the reaction Hydrolysis of an N(4)-(acetyl-beta-D-glucosaminyl)asparagine residue in which the glucosamine residue may be further glycosylated, to yield a (substituted) N-acetyl-beta-D-glucosaminylamine and a peptide containing an aspartate residue.. Functionally, specifically deglycosylates the denatured form of N-linked glycoproteins in the cytoplasm and assists their proteasome-mediated degradation. Cleaves the beta-aspartyl-glucosamine (GlcNAc) of the glycan and the amide side chain of Asn, converting Asn to Asp. Prefers proteins containing high-mannose over those bearing complex type oligosaccharides. Can recognize misfolded proteins in the endoplasmic reticulum that are exported to the cytosol to be destroyed and deglycosylate them, while it has no activity toward native proteins. Deglycosylation is a prerequisite for subsequent proteasome-mediated degradation of some, but not all, misfolded glycoproteins. This chain is Peptide-N(4)-(N-acetyl-beta-glucosaminyl)asparagine amidase (PNG1), found in Oryza sativa subsp. japonica (Rice).